We begin with the raw amino-acid sequence, 635 residues long: tRNA uridine 5-carboxymethylaminomethyl modification enzyme MnmG (635 aa).

19–24 provides a ligand contact to FAD; it reads GAGHAG. 280 to 294 contacts NAD(+); it reads GPRYCPSIEDKIVRF.

This sequence belongs to the MnmG family. Homodimer. Heterotetramer of two MnmE and two MnmG subunits. It depends on FAD as a cofactor.

Its subcellular location is the cytoplasm. Its function is as follows. NAD-binding protein involved in the addition of a carboxymethylaminomethyl (cmnm) group at the wobble position (U34) of certain tRNAs, forming tRNA-cmnm(5)s(2)U34. This Synechocystis sp. (strain ATCC 27184 / PCC 6803 / Kazusa) protein is tRNA uridine 5-carboxymethylaminomethyl modification enzyme MnmG.